The primary structure comprises 298 residues: Thymidylate synthase (298 aa).

DUMP contacts are provided by residues Arg25 and 159 to 160; that span reads RR. Cys179 acts as the Nucleophile in catalysis. DUMP is bound by residues 200–203, Asn211, and 241–243; these read RSVD and HLY. Asp203 lines the (6R)-5,10-methylene-5,6,7,8-tetrahydrofolate pocket. Ala297 is a binding site for (6R)-5,10-methylene-5,6,7,8-tetrahydrofolate.

The protein belongs to the thymidylate synthase family. Bacterial-type ThyA subfamily. Homodimer.

The protein localises to the cytoplasm. The enzyme catalyses dUMP + (6R)-5,10-methylene-5,6,7,8-tetrahydrofolate = 7,8-dihydrofolate + dTMP. It functions in the pathway pyrimidine metabolism; dTTP biosynthesis. Catalyzes the reductive methylation of 2'-deoxyuridine-5'-monophosphate (dUMP) to 2'-deoxythymidine-5'-monophosphate (dTMP) while utilizing 5,10-methylenetetrahydrofolate (mTHF) as the methyl donor and reductant in the reaction, yielding dihydrofolate (DHF) as a by-product. This enzymatic reaction provides an intracellular de novo source of dTMP, an essential precursor for DNA biosynthesis. The chain is Thymidylate synthase from Cereibacter sphaeroides (strain ATCC 17025 / ATH 2.4.3) (Rhodobacter sphaeroides).